A 78-amino-acid polypeptide reads, in one-letter code: DNA-directed RNA polymerase subunit Rpo5 (78 aa).

It belongs to the archaeal Rpo5/eukaryotic RPB5 RNA polymerase subunit family. In terms of assembly, part of the RNA polymerase complex.

It localises to the cytoplasm. The catalysed reaction is RNA(n) + a ribonucleoside 5'-triphosphate = RNA(n+1) + diphosphate. In terms of biological role, DNA-dependent RNA polymerase (RNAP) catalyzes the transcription of DNA into RNA using the four ribonucleoside triphosphates as substrates. The polypeptide is DNA-directed RNA polymerase subunit Rpo5 (Methanococcoides burtonii (strain DSM 6242 / NBRC 107633 / OCM 468 / ACE-M)).